The sequence spans 283 residues: uncharacterized protein (283 aa).

Residue D121 is part of the active site.

It belongs to the pseudouridine synthase RluA family.

The catalysed reaction is a uridine in RNA = a pseudouridine in RNA. This is an uncharacterized protein from Bacillus subtilis (strain 168).